Consider the following 157-residue polypeptide: Small ribosomal subunit protein uS9 (157 aa).

The protein belongs to the universal ribosomal protein uS9 family.

This chain is Small ribosomal subunit protein uS9, found in Caulobacter sp. (strain K31).